Reading from the N-terminus, the 367-residue chain is MSFDSVPRHALSMRFDLEPPSHASAAHRVAVLLVNLGTPDAPTPRAVRRYLAQFLSDPRVVEIPQLVWQVILRTLILPLRGRASAKKYAAVWLPEGSPLRVYTERQVESVKPLFAANGYRVIVDYAMRYGTPSIADVLAQLKRAGAERVLLLPMYPQYSSSTTATAFDAAFAALGRMRNQPEVRTVRHYADHPAYIHALAEQVRQYWAAHGRPAFDAGDKLVLSFHGVPKRTLDLGDPYHDQCQQTAALLMSALGLTTFECRVTFQSRFGKAEWLQPYTAPTLKELGAAGVRRADVFCPGFTADCLETIEEIGIEVRDAFVHGGGKEFHRIPCLNASPAWIAALGEIAAENLQGWPVRVAMAPEAVS.

H226 and E307 together coordinate Fe cation.

The protein belongs to the ferrochelatase family.

It is found in the cytoplasm. The enzyme catalyses heme b + 2 H(+) = protoporphyrin IX + Fe(2+). Its pathway is porphyrin-containing compound metabolism; protoheme biosynthesis; protoheme from protoporphyrin-IX: step 1/1. Catalyzes the ferrous insertion into protoporphyrin IX. The sequence is that of Ferrochelatase from Burkholderia pseudomallei (strain 668).